A 179-amino-acid chain; its full sequence is Riboflavin kinase (179 aa).

61 to 66 (GDGEGR) is a CDP binding site. T90 and N92 together coordinate Mg(2+). FMN-binding residues include T147 and E155. Position 160–163 (160–163 (VELR)) interacts with CDP.

The protein belongs to the archaeal riboflavin kinase family. The cofactor is Mg(2+).

It catalyses the reaction riboflavin + CTP = CDP + FMN + H(+). The protein operates within cofactor biosynthesis; FMN biosynthesis; FMN from riboflavin (CTP route): step 1/1. Catalyzes the CTP-dependent phosphorylation of riboflavin (vitamin B2) to form flavin mononucleotide (FMN). The polypeptide is Riboflavin kinase (Ignicoccus hospitalis (strain KIN4/I / DSM 18386 / JCM 14125)).